Reading from the N-terminus, the 247-residue chain is MVKILLENEPYLVARIDNQSLNPYMFGERYGFGIEAQNEQNSKIKKVIEHYEKKVASGKVPIRESKSLFIKDTKETPDSLKFLQYLYDKGNEENLKLYIAVNLKQNKDVFYQAVMSNKKKLVKKILSYNPKCIDYTNSEGHNVLHIALKNKAKADAEMIEILLQCKPKLITEKNKENLTPLMFGEKYGFSEVLSKKEIDKIKAILKDYERDAIRYDSYLPDPPNEKMVDFEDELLGNNLGGVNGTEL.

2 ANK repeats span residues 105-135 (QNKD…CIDY) and 139-171 (EGHN…KLIT).

The sequence is that of Putative ankyrin repeat protein RBE_1110 from Rickettsia bellii (strain RML369-C).